Here is a 269-residue protein sequence, read N- to C-terminus: Chymotrypsin-like elastase family member 2A (269 aa).

Positions 1–16 (MIRTLLLSTLVAGALS) are cleaved as a signal peptide. Residues 17–28 (CGDPTYPPYVTR) constitute a propeptide, activation peptide. Residues 29-267 (VVGGEEARPN…YIDWINSVIA (239 aa)) form the Peptidase S1 domain. Cysteine 58 and cysteine 74 are disulfide-bonded. Residues histidine 73 and aspartate 121 each act as charge relay system in the active site. Cystine bridges form between cysteine 155-cysteine 222, cysteine 186-cysteine 202, and cysteine 212-cysteine 243. Serine 216 acts as the Charge relay system in catalysis.

The protein belongs to the peptidase S1 family. Elastase subfamily. As to quaternary structure, interacts with CPA1. Interacts with SERPINA1. As to expression, expressed in pancreas. Not detected in keratinocytes. Detected in exocrine secretions of the pancreas (at protein level). Also expressed in a small fraction of cells in pancreatic islets, adrenal cortex, intestinal glands and colonic lymphoid follicles (at protein level). Detected in plasma.

It localises to the secreted. It catalyses the reaction Preferential cleavage: Leu-|-Xaa, Met-|-Xaa and Phe-|-Xaa. Hydrolyzes elastin.. Elastase that enhances insulin signaling and might have a physiologic role in cellular glucose metabolism. Circulates in plasma and reduces platelet hyperactivation, triggers both insulin secretion and degradation, and increases insulin sensitivity. This is Chymotrypsin-like elastase family member 2A from Homo sapiens (Human).